Consider the following 306-residue polypeptide: tRNA dimethylallyltransferase (306 aa).

Residue 12-19 participates in ATP binding; the sequence is GPTASGKT. 14-19 contacts substrate; that stretch reads TASGKT. 3 interaction with substrate tRNA regions span residues 37–40, 161–165, and 242–247; these read DSAL, QRLSR, and RCVGYR.

Belongs to the IPP transferase family. As to quaternary structure, monomer. The cofactor is Mg(2+).

The catalysed reaction is adenosine(37) in tRNA + dimethylallyl diphosphate = N(6)-dimethylallyladenosine(37) in tRNA + diphosphate. Its function is as follows. Catalyzes the transfer of a dimethylallyl group onto the adenine at position 37 in tRNAs that read codons beginning with uridine, leading to the formation of N6-(dimethylallyl)adenosine (i(6)A). The polypeptide is tRNA dimethylallyltransferase (Shewanella amazonensis (strain ATCC BAA-1098 / SB2B)).